A 365-amino-acid chain; its full sequence is Cobalt-precorrin-5B C(1)-methyltransferase (365 aa).

The protein belongs to the CbiD family.

The enzyme catalyses Co-precorrin-5B + S-adenosyl-L-methionine = Co-precorrin-6A + S-adenosyl-L-homocysteine. It functions in the pathway cofactor biosynthesis; adenosylcobalamin biosynthesis; cob(II)yrinate a,c-diamide from sirohydrochlorin (anaerobic route): step 6/10. In terms of biological role, catalyzes the methylation of C-1 in cobalt-precorrin-5B to form cobalt-precorrin-6A. The polypeptide is Cobalt-precorrin-5B C(1)-methyltransferase (Methanococcus maripaludis (strain DSM 14266 / JCM 13030 / NBRC 101832 / S2 / LL)).